A 252-amino-acid polypeptide reads, in one-letter code: AA9 family lytic polysaccharide monooxygenase B (252 aa).

A signal peptide spans 1–20; sequence MVSFTKTFFAIVACALGVQA. The Cu(2+) site is built by H21 and H106. A disulfide bond links C72 and C198. N-linked (GlcNAc...) asparagine glycosylation is present at N158. 2 residues coordinate O2: H184 and Q193. Residue Y195 participates in Cu(2+) binding. N237 is a glycosylation site (N-linked (GlcNAc...) asparagine).

It belongs to the polysaccharide monooxygenase AA9 family. The cofactor is Cu(2+).

Its subcellular location is the secreted. The enzyme catalyses [(1-&gt;4)-beta-D-glucosyl]n+m + reduced acceptor + O2 = 4-dehydro-beta-D-glucosyl-[(1-&gt;4)-beta-D-glucosyl]n-1 + [(1-&gt;4)-beta-D-glucosyl]m + acceptor + H2O.. Lytic polysaccharide monooxygenase (LPMO) that depolymerizes crystalline and amorphous polysaccharides via the oxidation of scissile alpha- or beta-(1-4)-glycosidic bonds, yielding C1 or C4 oxidation products. Catalysis by LPMOs requires the reduction of the active-site copper from Cu(II) to Cu(I) by a reducing agent and H(2)O(2) or O(2) as a cosubstrate. The synergistic activity of LPMO9B with xylanase Xyl10G or cellulase Cel5B shows efficient bioconversion rates of 56 and 174 percent in pretreated kenaf (Hibiscus cannabinus) and oak, respectively. This is AA9 family lytic polysaccharide monooxygenase B from Gloeophyllum trabeum (strain ATCC 11539 / FP-39264 / Madison 617) (Brown rot fungus).